The sequence spans 357 residues: UDP-N-acetylglucosamine--N-acetylmuramyl-(pentapeptide) pyrophosphoryl-undecaprenol N-acetylglucosamine transferase (357 aa).

Residues 14-16 (TGG), Asn-126, Arg-162, Ser-190, Ile-246, 265-270 (ALTVCE), and Gln-290 each bind UDP-N-acetyl-alpha-D-glucosamine.

It belongs to the glycosyltransferase 28 family. MurG subfamily.

The protein localises to the cell inner membrane. It carries out the reaction di-trans,octa-cis-undecaprenyl diphospho-N-acetyl-alpha-D-muramoyl-L-alanyl-D-glutamyl-meso-2,6-diaminopimeloyl-D-alanyl-D-alanine + UDP-N-acetyl-alpha-D-glucosamine = di-trans,octa-cis-undecaprenyl diphospho-[N-acetyl-alpha-D-glucosaminyl-(1-&gt;4)]-N-acetyl-alpha-D-muramoyl-L-alanyl-D-glutamyl-meso-2,6-diaminopimeloyl-D-alanyl-D-alanine + UDP + H(+). The protein operates within cell wall biogenesis; peptidoglycan biosynthesis. Functionally, cell wall formation. Catalyzes the transfer of a GlcNAc subunit on undecaprenyl-pyrophosphoryl-MurNAc-pentapeptide (lipid intermediate I) to form undecaprenyl-pyrophosphoryl-MurNAc-(pentapeptide)GlcNAc (lipid intermediate II). This Histophilus somni (strain 129Pt) (Haemophilus somnus) protein is UDP-N-acetylglucosamine--N-acetylmuramyl-(pentapeptide) pyrophosphoryl-undecaprenol N-acetylglucosamine transferase.